We begin with the raw amino-acid sequence, 327 residues long: Phosphoenolpyruvate transferase (327 aa).

D59 serves as a coordination point for 7,8-didemethyl-8-hydroxy-5-deazariboflavin.

Belongs to the CofD family. As to quaternary structure, homodimer. Mg(2+) is required as a cofactor.

The catalysed reaction is enolpyruvoyl-2-diphospho-5'-guanosine + 7,8-didemethyl-8-hydroxy-5-deazariboflavin = dehydro coenzyme F420-0 + GMP + H(+). It functions in the pathway cofactor biosynthesis; coenzyme F420 biosynthesis. Its function is as follows. Catalyzes the transfer of the phosphoenolpyruvate moiety from enoylpyruvoyl-2-diphospho-5'-guanosine (EPPG) to 7,8-didemethyl-8-hydroxy-5-deazariboflavin (FO) with the formation of dehydro coenzyme F420-0 and GMP. This Mycolicibacterium smegmatis (strain ATCC 700084 / mc(2)155) (Mycobacterium smegmatis) protein is Phosphoenolpyruvate transferase.